The sequence spans 225 residues: Phosphatidylserine decarboxylase proenzyme (225 aa).

The active-site Schiff-base intermediate with substrate; via pyruvic acid is S195. Position 195 is a pyruvic acid (Ser); by autocatalysis (S195).

This sequence belongs to the phosphatidylserine decarboxylase family. PSD-A subfamily. Heterodimer of a large membrane-associated beta subunit and a small pyruvoyl-containing alpha subunit. Pyruvate serves as cofactor. In terms of processing, is synthesized initially as an inactive proenzyme. Formation of the active enzyme involves a self-maturation process in which the active site pyruvoyl group is generated from an internal serine residue via an autocatalytic post-translational modification. Two non-identical subunits are generated from the proenzyme in this reaction, and the pyruvate is formed at the N-terminus of the alpha chain, which is derived from the carboxyl end of the proenzyme. The post-translation cleavage follows an unusual pathway, termed non-hydrolytic serinolysis, in which the side chain hydroxyl group of the serine supplies its oxygen atom to form the C-terminus of the beta chain, while the remainder of the serine residue undergoes an oxidative deamination to produce ammonia and the pyruvoyl prosthetic group on the alpha chain.

Its subcellular location is the cell membrane. The enzyme catalyses a 1,2-diacyl-sn-glycero-3-phospho-L-serine + H(+) = a 1,2-diacyl-sn-glycero-3-phosphoethanolamine + CO2. The protein operates within phospholipid metabolism; phosphatidylethanolamine biosynthesis; phosphatidylethanolamine from CDP-diacylglycerol: step 2/2. Catalyzes the formation of phosphatidylethanolamine (PtdEtn) from phosphatidylserine (PtdSer). The polypeptide is Phosphatidylserine decarboxylase proenzyme (Gluconobacter oxydans (strain 621H) (Gluconobacter suboxydans)).